The following is a 382-amino-acid chain: MGLLLPLALCILVLCCGAMSPPQLALNPSALLSRGCNDSDVLAVAGFALRDINKDRKDGYVLRLNRVNDAQEYRRGGLGSLFYLTLDVLETDCHVLRKKAWQDCGMRIFFESVYGQCKAIFYMNNPSRVLYLAAYNCTLRPVSKKKIYMTCPDCPSSIPTDSSNHQVLEAATESLAKYNNENTSKQYSLFKVTRASSQWVVGPSYFVEYLIKESPCTKSQASSCSLQSSDSVPVGLCKGSLTRTHWEKFVSVTCDFFESQAPATGSENSAVNQKPTNLPKVEESQQKNTPPTDSPSKAGPRGSVQYLPDLDDKNSQEKGPQEAFPVHLDLTTNPQGETLDISFLFLEPMEEKLVVLPFPKEKARTAECPGPAQNASPLVLPP.

The N-terminal stretch at 1–15 (MGLLLPLALCILVLC) is a signal peptide. 2 Cystatin fetuin-B-type domains span residues 25 to 138 (ALNP…YNCT) and 149 to 255 (MTCP…VTCD). N-linked (GlcNAc...) asparagine glycosylation is present at Asn37. 3 disulfide bridges follow: Cys93-Cys104, Cys117-Cys137, and Cys151-Cys154. Asn136 carries an N-linked (GlcNAc...) asparagine glycan. An N-linked (GlcNAc...) asparagine glycan is attached at Asn182. Cystine bridges form between Cys216-Cys224 and Cys237-Cys254. 2 stretches are compositionally biased toward polar residues: residues 262–276 (PATG…QKPT) and 286–295 (QKNTPPTDSP). Disordered stretches follow at residues 262–320 (PATG…EKGP) and 363–382 (ARTA…VLPP). O-linked (GalNAc...) threonine glycosylation is found at Thr289 and Thr292. Over residues 310-320 (LDDKNSQEKGP) the composition is skewed to basic and acidic residues. A Phosphoserine modification is found at Ser315.

This sequence belongs to the fetuin family. In terms of tissue distribution, liver and testis.

The protein resides in the secreted. Functionally, protease inhibitor required for egg fertilization. Required to prevent premature zona pellucida hardening before fertilization, probably by inhibiting the protease activity of ASTL, a protease that mediates the cleavage of ZP2 and triggers zona pellucida hardening. This chain is Fetuin-B (FETUB), found in Homo sapiens (Human).